The sequence spans 851 residues: Phosphatidylinositol 4-kinase pik1 (851 aa).

The 123-residue stretch at 1-123 folds into the PIK helical domain; it reads MPSSNSGNEL…KICKRLYNRI (123 aa). Ser-202, Ser-219, Ser-222, and Ser-235 each carry phosphoserine. At Tyr-236 the chain carries Phosphotyrosine. The disordered stretch occupies residues 384-404; sequence LQDSTDNDISESESEGGDLSM. Over residues 388–399 the composition is skewed to acidic residues; that stretch reads TDNDISESESEG. Residues 558-836 enclose the PI3K/PI4K catalytic domain; it reads YAKKERIRKS…LIQKANCSVW (279 aa). A G-loop region spans residues 564–570; that stretch reads IRKSSPY. The segment at 706–714 is catalytic loop; sequence QLKDRHNGN. The tract at residues 725 to 749 is activation loop; the sequence is HIDFGFLLTNTPGNVGFESAPFKLT.

Belongs to the PI3/PI4-kinase family. Interacts with cdc4 and cam2.

The protein resides in the golgi apparatus. It is found in the nucleus. The enzyme catalyses a 1,2-diacyl-sn-glycero-3-phospho-(1D-myo-inositol) + ATP = a 1,2-diacyl-sn-glycero-3-phospho-(1D-myo-inositol 4-phosphate) + ADP + H(+). In terms of biological role, acts on phosphatidylinositol (PI) in the first committed step in the production of the second messenger inositol 1,4,5,-trisphosphate. PIK1 is part of a nuclear phosphoinositide cycle and could control cytokinesis through the actin cytoskeleton. This chain is Phosphatidylinositol 4-kinase pik1 (pik1), found in Schizosaccharomyces pombe (strain 972 / ATCC 24843) (Fission yeast).